Consider the following 525-residue polypeptide: Mitochondrial-processing peptidase subunit alpha (525 aa).

Residues 1–33 constitute a mitochondrion transit peptide; that stretch reads MAAVVLAATRLLRGSGSWGCSRLRFGPPAYRRF. Lys-64 carries the N6-succinyllysine modification. Position 299 is an N6-acetyllysine (Lys-299).

Belongs to the peptidase M16 family. As to quaternary structure, heterodimer of PMPCA (alpha) and PMPCB (beta) subunits, forming the mitochondrial processing protease (MPP) in which PMPCA is involved in substrate recognition and binding and PMPCB is the catalytic subunit. In terms of tissue distribution, ubiquitously expressed with highest expression in fetal tissues and adult brain, cerebellum and cerebellar vermis.

The protein resides in the mitochondrion matrix. It is found in the mitochondrion inner membrane. Its function is as follows. Substrate recognition and binding subunit of the essential mitochondrial processing protease (MPP), which cleaves the mitochondrial sequence off newly imported precursors proteins. This chain is Mitochondrial-processing peptidase subunit alpha (PMPCA), found in Homo sapiens (Human).